Here is a 471-residue protein sequence, read N- to C-terminus: Steroid C26-monooxygenase (471 aa).

Residue Gly238 coordinates substrate. A heme-binding site is contributed by Cys412.

The protein belongs to the cytochrome P450 family. It depends on heme as a cofactor.

The catalysed reaction is cholest-4-en-3-one + 6 reduced [2Fe-2S]-[ferredoxin] + 3 O2 + 5 H(+) = (25S)-3-oxocholest-4-en-26-oate + 6 oxidized [2Fe-2S]-[ferredoxin] + 4 H2O. In terms of biological role, involved in the utilization of cholesterol as the sole carbon and energy source by degrading the side chain. Primarily catalyzes the sequential oxidation of the terminal methyl of cholest-4-en-3-one into (25S)-26-hydroxycholest-4-en-3-one (alcohol), (25S)-26-oxocholest-4-en-3-one (aldehyde), to finally yield the carboxylic acid (25S)-3-oxocholest-4-en-26-oate. Also able to sequentially oxidize cholesterol itself, not only cholest-4-en-3-one. This chain is Steroid C26-monooxygenase (cyp125), found in Rhodococcus jostii (strain RHA1).